The primary structure comprises 226 residues: Leucyl/phenylalanyl-tRNA--protein transferase (226 aa).

Belongs to the L/F-transferase family.

It is found in the cytoplasm. It catalyses the reaction N-terminal L-lysyl-[protein] + L-leucyl-tRNA(Leu) = N-terminal L-leucyl-L-lysyl-[protein] + tRNA(Leu) + H(+). The catalysed reaction is N-terminal L-arginyl-[protein] + L-leucyl-tRNA(Leu) = N-terminal L-leucyl-L-arginyl-[protein] + tRNA(Leu) + H(+). The enzyme catalyses L-phenylalanyl-tRNA(Phe) + an N-terminal L-alpha-aminoacyl-[protein] = an N-terminal L-phenylalanyl-L-alpha-aminoacyl-[protein] + tRNA(Phe). Its function is as follows. Functions in the N-end rule pathway of protein degradation where it conjugates Leu, Phe and, less efficiently, Met from aminoacyl-tRNAs to the N-termini of proteins containing an N-terminal arginine or lysine. This Pseudomonas fluorescens (strain SBW25) protein is Leucyl/phenylalanyl-tRNA--protein transferase.